The chain runs to 651 residues: L-type lectin-domain containing receptor kinase IX.1 (651 aa).

Positions 1–19 are cleaved as a signal peptide; it reads MANSILLFSFVLVLPFVCS. The segment at 20-251 is legume-lectin like; sequence VQFNISRFGS…GNRLLSWEFS (232 aa). Over 20 to 269 the chain is Extracellular; sequence VQFNISRFGS…KKSQNDKKGM (250 aa). Residues asparagine 23, asparagine 125, asparagine 129, asparagine 162, asparagine 169, asparagine 174, asparagine 195, and asparagine 211 are each glycosylated (N-linked (GlcNAc...) asparagine). The helical transmembrane segment at 270–290 threads the bilayer; the sequence is IIGISVSGFVLLTFFITSLIV. The Cytoplasmic segment spans residues 291–651; sequence FLKRKQQKKK…VTFSSAQHGR (361 aa). The 282-residue stretch at 335–616 folds into the Protein kinase domain; sequence FADDRKLGEG…LNLEAPVPHL (282 aa). Residues 341-349 and lysine 364 each bind ATP; that span reads LGEGGFGAV. The active-site Proton acceptor is the aspartate 459. The tract at residues 630 to 651 is disordered; sequence SNTTSVSSGGATVTFSSAQHGR.

In the C-terminal section; belongs to the protein kinase superfamily. Ser/Thr protein kinase family. This sequence in the N-terminal section; belongs to the leguminous lectin family. As to quaternary structure, interacts with ABCG40.

The protein localises to the cell membrane. It carries out the reaction L-seryl-[protein] + ATP = O-phospho-L-seryl-[protein] + ADP + H(+). The catalysed reaction is L-threonyl-[protein] + ATP = O-phospho-L-threonyl-[protein] + ADP + H(+). Its function is as follows. Promotes hydrogen peroxide H(2)O(2) production and cell death. Functionally, involved in resistance response to the pathogenic oomycetes Phytophthora infestans and Phytophthora capsici. This Arabidopsis thaliana (Mouse-ear cress) protein is L-type lectin-domain containing receptor kinase IX.1.